Here is a 146-residue protein sequence, read N- to C-terminus: Nucleoside diphosphate kinase (146 aa).

Residues K11, F59, R87, T93, R104, and N114 each coordinate ATP. The Pros-phosphohistidine intermediate role is filled by H117.

It belongs to the NDK family. Homotetramer. Mg(2+) serves as cofactor.

Its subcellular location is the cytoplasm. It catalyses the reaction a 2'-deoxyribonucleoside 5'-diphosphate + ATP = a 2'-deoxyribonucleoside 5'-triphosphate + ADP. The enzyme catalyses a ribonucleoside 5'-diphosphate + ATP = a ribonucleoside 5'-triphosphate + ADP. Its function is as follows. Major role in the synthesis of nucleoside triphosphates other than ATP. The ATP gamma phosphate is transferred to the NDP beta phosphate via a ping-pong mechanism, using a phosphorylated active-site intermediate. This chain is Nucleoside diphosphate kinase, found in Anaeromyxobacter sp. (strain Fw109-5).